The following is a 591-amino-acid chain: Frizzled-9 (591 aa).

Residues 1–22 (MAVAPLRGALLLWQLLAAGGAA) form the signal peptide. Topologically, residues 23-229 (LEIGRFDPER…EVFWSRRDKD (207 aa)) are extracellular. Residues 34-155 (RGAAPCQAVE…NDPHALCMEA (122 aa)) form the FZ domain. Cystine bridges form between Cys-39-Cys-100, Cys-47-Cys-93, Cys-84-Cys-122, Cys-111-Cys-152, and Cys-115-Cys-139. N-linked (GlcNAc...) asparagine glycosylation is present at Asn-53. Residues 58-172 (PNLLGHTSQG…PAEPHKGLGM (115 aa)) form a required for Wnt-activated receptor activity region. Asn-158 carries an N-linked (GlcNAc...) asparagine glycan. A helical membrane pass occupies residues 230-250 (FALVWMAVWSALCFFSTAFTV). The Cytoplasmic segment spans residues 251 to 266 (LTFLLEPHRFQYPERP). Residues 267–287 (IIFLSMCYNVYSLAFLIRAVA) traverse the membrane as a helical segment. Residues 288–315 (GAQSVACDQEAGALYVIQEGLENTGCTL) lie on the Extracellular side of the membrane. A helical membrane pass occupies residues 316-336 (VFLLLYYFGMASSLWWVVLTL). At 337–355 (TWFLAAGKKWGHEAIEAHG) the chain is on the cytoplasmic side. Residues 356 to 376 (SYFHMAAWGLPALKTIVILTL) traverse the membrane as a helical segment. The Extracellular portion of the chain corresponds to 377–400 (RKVAGDELTGLCYVASTDAAALTG). The chain crosses the membrane as a helical span at residues 401–421 (FVLVPLSGYLVLGSSFLLTGF). The Cytoplasmic portion of the chain corresponds to 422–447 (VALFHIRKIMKTGGTNTEKLEKLMVK). A helical transmembrane segment spans residues 448–468 (IGVFSILYTVPATCVIVCYVY). Residues 469-508 (ERLNMDFWRLRATEQPCAAAAGPGGRRDCSLPGGSVPTVA) are Extracellular-facing. A helical membrane pass occupies residues 509–529 (VFMLKIFMSLVVGITSGVWVW). Topologically, residues 530 to 591 (SSKTFQTWQS…DPSLENPTHL (62 aa)) are cytoplasmic. Positions 532–537 (KTFQTW) match the Lys-Thr-X-X-X-Trp motif, mediates interaction with the PDZ domain of Dvl family members motif. The required for CTNNB1 accumulation and TCF transcription factor activity stretch occupies residues 554 to 591 (ACRAPGSYGRGTHCHYKAPTVVLHMTKTDPSLENPTHL).

Belongs to the G-protein coupled receptor Fz/Smo family. In terms of processing, ubiquitinated by ZNRF3, leading to its degradation by the proteasome. In terms of tissue distribution, expressed predominantly in adult and fetal brain, testis, eye, skeletal muscle and kidney. Moderately expressed in pancreas, thyroid, adrenal cortex, small intestine and stomach. Detected in fetal liver and kidney. Expressed in neural progenitor cells.

Its subcellular location is the cell membrane. Its function is as follows. Receptor for WNT2 that is coupled to the beta-catenin canonical signaling pathway, which leads to the activation of disheveled proteins, inhibition of GSK-3 kinase, nuclear accumulation of beta-catenin and activation of Wnt target genes. Plays a role in neuromuscular junction (NMJ) assembly by negatively regulating the clustering of acetylcholine receptors (AChR) through the beta-catenin canonical signaling pathway. May play a role in neural progenitor cells (NPCs) viability through the beta-catenin canonical signaling pathway by negatively regulating cell cycle arrest leading to inhibition of neuron apoptotic process. During hippocampal development, regulates neuroblast proliferation and apoptotic cell death. Controls bone formation through non canonical Wnt signaling mediated via ISG15. Positively regulates bone regeneration through non canonical Wnt signaling. The polypeptide is Frizzled-9 (FZD9) (Homo sapiens (Human)).